Consider the following 139-residue polypeptide: Holo-[acyl-carrier-protein] synthase (139 aa).

Mg(2+) is bound by residues Asp8 and Glu61.

It belongs to the P-Pant transferase superfamily. AcpS family. It depends on Mg(2+) as a cofactor.

It is found in the cytoplasm. It catalyses the reaction apo-[ACP] + CoA = holo-[ACP] + adenosine 3',5'-bisphosphate + H(+). Its function is as follows. Transfers the 4'-phosphopantetheine moiety from coenzyme A to a Ser of acyl-carrier-protein. The polypeptide is Holo-[acyl-carrier-protein] synthase (Rhodopseudomonas palustris (strain BisB5)).